Reading from the N-terminus, the 479-residue chain is MCDKDRFKVIIVGGSVAGLTLAHCLQRAGIDHVVLEKNSDLSPQVGASIGIIPNGGRILDQLGLFDAVERMTYPLSIATITYPDGYSFRNNYPKTVDERFGYPIAFLDRQKFLEILHTSYPDPSNIHTNCRVTHIRRHDSHMEVVTSSGQEYTGDLVVGADGVHSVIRSEMWKLADALEPGRVSKREKRSMKVEYACVFGISLPVPGLKVGDQVNAFHDGLTIITIHGKNGRVFWFVIKKLDDMYTYPDTVRFSSADAVRTCENIVHFPLVNGATFGHVWENREVTSMTALEENIFNTWYADRIVCIGDSIHKMTPNIGQGANTAIEDATVLTNLLYDRLSKNGHKKLARQELLQLLREFQSQRFRRVNKIYQDSRFLVRLHARDGIVKSLLARYIVPYMTELPADLASKSIADSPTIGFLPLPSRSGPGWLQWSRKQRRPATPWILVLLVIVVSFGLHSPELVIPTFWSNSLVSKTVE.

Residues 10–30 (IIVGGSVAGLTLAHCLQRAGI) form a helical membrane-spanning segment. Residues Glu36, Gly50, Arg109, Asp309, and Ala322 each contribute to the FAD site. A helical membrane pass occupies residues 445 to 465 (WILVLLVIVVSFGLHSPELVI).

Belongs to the paxM FAD-dependent monooxygenase family. FAD is required as a cofactor.

The protein resides in the membrane. Its pathway is secondary metabolite biosynthesis. FAD-dependent monooxygenase; part of the ATM1 gene cluster that mediates the biosynthesis of aflatrem, a tremorgenic mycotoxin with acute neurotoxic effects. Synthesis of geranylgeranyl diphosphate (GGPP) by AtmG (a GGPP synthase) precedes condensation of GGPP with indole 3-glycerol phosphate, followed by epoxidation and cyclization by AtmM (a FAD-dependent monooxygenase) and AtmC (a prenyltransferase) to produce paspaline. AtmB is also essential for paspaline production, but its exact role has not been identified yet. AtmP, a cytochrome P450 monooxygenase, subsequently converts paspaline to 13-desoxypaxilline via PC-M6 by removal of the C-30 methyl group and oxidation at C-10. AtmQ, a cytochrome P450 monooxygenase, then catalyzes the oxidation of 13-desoxypaxilline, first at C-7 to produce paspalicine and then at C-13 to form paspalinine. Finally, AtmD prenylates paspalinine to form aflatrem. This chain is FAD-dependent monooxygenase atmM, found in Aspergillus flavus.